The primary structure comprises 372 residues: Cytochrome b (372 aa).

Transmembrane regions (helical) follow at residues 25–45 (FGSM…FLAI), 69–90 (WIMQ…YIHI), 105–125 (WLSG…GYVL), and 170–190 (FFAL…IHII). H75 and H89 together coordinate heme b. The heme b site is built by H174 and H188. Residue H193 participates in a ubiquinone binding. The next 4 helical transmembrane spans lie at 218 to 238 (YKDM…LSFS), 280 to 300 (LGGT…PFTH), 312 to 332 (LTQT…WTAT), and 339 to 358 (FISI…IINP).

The protein belongs to the cytochrome b family. The cytochrome bc1 complex contains 3 respiratory subunits (MT-CYB, CYC1 and UQCRFS1), 2 core proteins (UQCRC1 and UQCRC2) and probably 6 low-molecular weight proteins. Heme b is required as a cofactor.

Its subcellular location is the mitochondrion inner membrane. Functionally, component of the ubiquinol-cytochrome c reductase complex (complex III or cytochrome b-c1 complex) that is part of the mitochondrial respiratory chain. The b-c1 complex mediates electron transfer from ubiquinol to cytochrome c. Contributes to the generation of a proton gradient across the mitochondrial membrane that is then used for ATP synthesis. In Dendroaspis polylepis polylepis (Black mamba), this protein is Cytochrome b (MT-CYB).